Reading from the N-terminus, the 1154-residue chain is DNA-directed RNA polymerase, mitochondrial (1154 aa).

The N-terminal 30 residues, methionine 1–leucine 30, are a transit peptide targeting the mitochondrion. The disordered stretch occupies residues glutamate 221 to threonine 243. Basic and acidic residues predominate over residues glutamate 223–aspartate 240. Residues aspartate 821, lysine 890, and aspartate 1061 contribute to the active site.

The protein belongs to the phage and mitochondrial RNA polymerase family.

It is found in the mitochondrion. It catalyses the reaction RNA(n) + a ribonucleoside 5'-triphosphate = RNA(n+1) + diphosphate. Its function is as follows. DNA-dependent RNA polymerase catalyzes the transcription of DNA into RNA using the four ribonucleoside triphosphates as substrates. Combines in the mitochondrion with mitochondrial transcription factor mtf1 as a holoenzyme to recognize and initiate transcription at the core mitochondrial promoters. The sequence is that of DNA-directed RNA polymerase, mitochondrial (rpo41) from Schizosaccharomyces pombe (strain 972 / ATCC 24843) (Fission yeast).